A 463-amino-acid chain; its full sequence is Perilipin-5 (463 aa).

The tract at residues 1 to 32 (MDQRGEDTTLAPHSRMSGDQTAQDPGSSLGEL) is disordered. The interval 1-123 (MDQRGEDTTL…KLEEKLPFLQ (123 aa)) is interaction with LIPE. The interval 1-188 (MDQRGEDTTL…RFLPMTEAEL (188 aa)) is essential for lipid droplet targeting. A phosphoserine mark is found at Ser-17, Ser-163, and Ser-337. Over residues 17-26 (SGDQTAQDPG) the composition is skewed to polar residues. Residues 200–463 (VGTVEEQRQQ…KHTMMPELDF (264 aa)) form an interaction with PNPLA2 and ABHD5 region. A disordered region spans residues 433-463 (AWEAESADPGGQEAEPPRGQGKHTMMPELDF). A necessary for mitochondria recruitment at the lipid droplet surface region spans residues 444–463 (QEAEPPRGQGKHTMMPELDF).

The protein belongs to the perilipin family. In terms of assembly, homooligomer. Interacts with PNPLA2; prevents interaction of PNPLA2 with ABHD5. Interacts with ABHD5; targets ABHD5 to lipid droplets and promotes interaction of ABHD5 with PNPLA2. Interacts with LIPE. Post-translationally, phosphorylated by PKA. Phosphorylated on serine in skeletal muscle at rest or with lipolytic stimulation. Highly expressed in oxidative tissues, including heart, liver, brown adipose tissue (BAT) and slow-twitch fibers of skeletal muscle. Lower expression in epididymal white adipose tissue and anterior tibialis and quadriceps. Expressed in adrenal glands. Isoform 2 has the highest expression in heart.

The protein localises to the lipid droplet. It localises to the cytoplasm. Its subcellular location is the mitochondrion. In terms of biological role, lipid droplet-associated protein that maintains the balance between lipogenesis and lipolysis and also regulates fatty acid oxidation in oxidative tissues. Recruits mitochondria to the surface of lipid droplets and is involved in lipid droplet homeostasis by regulating both the storage of fatty acids in the form of triglycerides and the release of fatty acids for mitochondrial fatty acid oxidation. In lipid droplet triacylglycerol hydrolysis, plays a role as a scaffolding protein for three major key lipolytic players: ABHD5, PNPLA2 and LIPE. Reduces the triacylglycerol hydrolase activity of PNPLA2 by recruiting and sequestering PNPLA2 to lipid droplets. Phosphorylation by PKA enables lipolysis probably by promoting release of ABHD5 from the perilipin scaffold and by facilitating interaction of ABHD5 with PNPLA2. Also increases lipolysis through interaction with LIPE and upon PKA-mediated phosphorylation of LIPE. This Mus musculus (Mouse) protein is Perilipin-5 (Plin5).